Reading from the N-terminus, the 521-residue chain is Cytochrome P450 52A9 (521 aa).

Cysteine 468 provides a ligand contact to heme.

Belongs to the cytochrome P450 family. It depends on heme as a cofactor.

It localises to the membrane. Functionally, together with an NADPH cytochrome P450 the enzyme system catalyzes the terminal hydroxylation as the first step in the assimilation of alkanes and fatty acids. In Candida maltosa (Yeast), this protein is Cytochrome P450 52A9 (CYP52A9).